Reading from the N-terminus, the 415-residue chain is G2/mitotic-specific cyclin cig1 (415 aa).

Disordered stretches follow at residues 54–74 and 86–118; these read PTLIEGNNESSISSSTGDTFE and EERSIRSTPKSIGDDDLENREGSFDAPEGILTH. Residues 57 to 71 show a composition bias toward low complexity; it reads IEGNNESSISSSTGD. A Phosphoserine modification is found at Ser-96.

Belongs to the cyclin family. Cyclin G subfamily.

In terms of biological role, required for efficient passage of the G1/S transition. The protein is G2/mitotic-specific cyclin cig1 (cig1) of Schizosaccharomyces pombe (strain 972 / ATCC 24843) (Fission yeast).